Here is a 476-residue protein sequence, read N- to C-terminus: Aspartyl/glutamyl-tRNA(Asn/Gln) amidotransferase subunit B (476 aa).

It belongs to the GatB/GatE family. GatB subfamily. As to quaternary structure, heterotrimer of A, B and C subunits.

The enzyme catalyses L-glutamyl-tRNA(Gln) + L-glutamine + ATP + H2O = L-glutaminyl-tRNA(Gln) + L-glutamate + ADP + phosphate + H(+). The catalysed reaction is L-aspartyl-tRNA(Asn) + L-glutamine + ATP + H2O = L-asparaginyl-tRNA(Asn) + L-glutamate + ADP + phosphate + 2 H(+). Its function is as follows. Allows the formation of correctly charged Asn-tRNA(Asn) or Gln-tRNA(Gln) through the transamidation of misacylated Asp-tRNA(Asn) or Glu-tRNA(Gln) in organisms which lack either or both of asparaginyl-tRNA or glutaminyl-tRNA synthetases. The reaction takes place in the presence of glutamine and ATP through an activated phospho-Asp-tRNA(Asn) or phospho-Glu-tRNA(Gln). This is Aspartyl/glutamyl-tRNA(Asn/Gln) amidotransferase subunit B from Latilactobacillus sakei subsp. sakei (strain 23K) (Lactobacillus sakei subsp. sakei).